The sequence spans 2643 residues: Ankyrin repeat domain-containing protein 11 (2643 aa).

Disordered regions lie at residues 1–90 and 128–170; these read MPKG…KEPV and SANS…RGET. Basic and acidic residues-rich tracts occupy residues 21 to 54 and 69 to 90; these read MVEKQTGKKDKDKVSLTKTPKLDRSDGGKEVRER and EQKDSDTEKQGPERKRIKKEPV. Positions 128-155 are enriched in polar residues; sequence SANSPVDTTPKHPSQSTVCQKGTPNSAS. Positions 156–170 are enriched in basic and acidic residues; it reads KTKDKVNKRNERGET. ANK repeat units lie at residues 167–196, 200–229, 233–262, and 266–292; these read RGETRLHRAAIRGDARRIKELISEGADVNV, AGWTALHEACNRGYYDIAKQLLAAGAEVNT, DDDTPLHDAANNGHYKVVKLLLRYGGNPQQ, and KGETPLKVANSPTMVNLLLGKGTYTSS. Phosphoserine is present on serine 276. The disordered stretch occupies residues 289–365; that stretch reads YTSSEESSTE…DRVPPVDDKH (77 aa). Over residues 295–305 the composition is skewed to acidic residues; that stretch reads SSTESSEEEDA. The span at 309-320 shows a compositional bias: polar residues; sequence APSSSVDGNNTD. 2 stretches are compositionally biased toward basic and acidic residues: residues 322 to 335 and 356 to 365; these read EFEKGLKLKAKNPE and DRVPPVDDKH. The residue at position 408 (serine 408) is a Phosphoserine. Threonine 410 bears the Phosphothreonine mark. Residue serine 411 is modified to Phosphoserine. Disordered stretches follow at residues 423–504, 517–651, and 727–805; these read GEKL…CLKG, SLSA…GQCS, and DANK…DKEK. Residues 438–451 show a composition bias toward basic and acidic residues; it reads KARESSSSRQQKEK. The span at 452 to 462 shows a compositional bias: basic residues; that stretch reads NKLKKKRKKET. Residues 463–475 are compositionally biased toward basic and acidic residues; it reads KGKEVRFGKRSDK. Over residues 484 to 494 the composition is skewed to acidic residues; it reads ESSESEEDDGD. Low complexity predominate over residues 517-528; it reads SLSASSTSSHGS. Positions 537-550 are enriched in basic and acidic residues; it reads GHTDQHTKHWRTDN. Positions 557–574 are enriched in polar residues; that stretch reads PAWSEVSSLSDSSRTGLT. Low complexity predominate over residues 575–588; it reads SESDCSSEGSSVES. 2 stretches are compositionally biased toward basic residues: residues 591–602 and 633–646; these read PTRRKQEHRKRG and VKKHKTKHKHKHKE. The residue at position 838 (serine 838) is a Phosphoserine. 2 stretches are compositionally biased toward basic and acidic residues: residues 918–931 and 938–962; these read KNSEKRRDQTEKHK and SEKDKKRRESAEGGRDRRDGRIRSE. Disordered stretches follow at residues 918–962, 977–1037, and 1051–1074; these read KNSE…IRSE, SFKD…STLD, and EKKDGKEKHKDIHSKDRKASFDQL. Serine 1070 is subject to Phosphoserine. Phosphothreonine is present on threonine 1111. Serine 1114 is modified (phosphoserine). 2 disordered regions span residues 1114 to 1388 and 1420 to 1711; these read SEDE…KDAS and LFSS…TPSC. Composition is skewed to basic and acidic residues over residues 1133-1297, 1326-1343, 1355-1388, 1420-1444, 1464-1535, 1546-1564, 1577-1587, and 1595-1640; these read DTQR…DKIS, AEDKARDSACLSEKLREK, KSHERERAKKEKAEKKEKSEDYKDSISSVRKDAS, LFSSEKKDRSDPEREPAKRIEKELK, RERW…KGDS, VPSRDSGKKDSRPREKLLG, LSQKDLEIEER, and MKQM…KVKE. A Phosphoserine modification is found at serine 1676. Polar residues predominate over residues 1678–1695; the sequence is RTEQSRPTGVPTPTSVVS. Phosphoserine is present on residues serine 1777 and serine 1832. A phosphotyrosine mark is found at tyrosine 1835 and tyrosine 1836. A phosphoserine mark is found at serine 1837 and serine 1844. Disordered stretches follow at residues 1863–1900, 1981–2027, and 2111–2386; these read PPDSVFSNLPPKSSPSPRGELLSPAIEGTLPPDLGLPL, SPKH…EVKD, and HEAF…STQQ. A phosphoserine mark is found at serine 1981 and serine 2139. Composition is skewed to pro residues over residues 2150-2160 and 2175-2184; these read PVPPAESPPGP and EEPPAPPPQE. Positions 2273–2284 are enriched in low complexity; the sequence is SAEASCVVAAAE. Positions 2297-2315 are enriched in basic and acidic residues; that stretch reads PEPKPTSEVPKAPKVEEVP. The segment at 2349 to 2643 is important for protein degradation; it reads AKGRASEEED…VNDDFVLLPA (295 aa). Over residues 2371–2386 the composition is skewed to low complexity; sequence RSSQQLQQQLNTSTQQ.

Interacts with the PAS region of the p160 coactivators. Post-translationally, subject to proteasomal degradation which is probably essential to regulate its activity.

The protein resides in the nucleus. Functionally, chromatin regulator which modulates histone acetylation and gene expression in neural precursor cells. May recruit histone deacetylases (HDACs) to the p160 coactivators/nuclear receptor complex to inhibit ligand-dependent transactivation. Has a role in proliferation and development of cortical neural precursors. May also regulate bone homeostasis. The protein is Ankyrin repeat domain-containing protein 11 of Mus musculus (Mouse).